Consider the following 337-residue polypeptide: tRNA N6-adenosine threonylcarbamoyltransferase (337 aa).

Residues His111 and His115 each coordinate Fe cation. Substrate-binding positions include 134-138, Asp167, Gly180, and Asn272; that span reads LVSGG. Asp300 lines the Fe cation pocket.

The protein belongs to the KAE1 / TsaD family. It depends on Fe(2+) as a cofactor.

It is found in the cytoplasm. It catalyses the reaction L-threonylcarbamoyladenylate + adenosine(37) in tRNA = N(6)-L-threonylcarbamoyladenosine(37) in tRNA + AMP + H(+). Functionally, required for the formation of a threonylcarbamoyl group on adenosine at position 37 (t(6)A37) in tRNAs that read codons beginning with adenine. Is involved in the transfer of the threonylcarbamoyl moiety of threonylcarbamoyl-AMP (TC-AMP) to the N6 group of A37, together with TsaE and TsaB. TsaD likely plays a direct catalytic role in this reaction. This is tRNA N6-adenosine threonylcarbamoyltransferase from Klebsiella pneumoniae (strain 342).